A 315-amino-acid polypeptide reads, in one-letter code: MPNLKAIRDQIQSVKNTKKITEAMRLVAAAKVRRAQEQVLCTRPFADALAQVLYNLQGRLAFSDVNLPLLAQREVKTVALLVVTGDRGLCGGYNTNVIRRAEQRMNELKEQGINYQLVVAGRKAAQYFERRNAPIAAKFINLEQIPTADEAGTIGDELLSLFLSETVDRVELIYTRFISLISATPVIQTLLPLTTQGLAVQDDEIFRLVTKEGKFKVQREKMASQPAQVFPQDMIFEQNPVQILDSLLPLYLNNQLLRALQESAASELAARMTAMSNASENASELIGTLSRTYNKARQAAITQELLEVVAGANAL.

This sequence belongs to the ATPase gamma chain family. In terms of assembly, F-type ATPases have 2 components, CF(1) - the catalytic core - and CF(0) - the membrane proton channel. CF(1) has five subunits: alpha(3), beta(3), gamma(1), delta(1), epsilon(1). CF(0) has three main subunits: a, b and c.

It is found in the cellular thylakoid membrane. Its function is as follows. Produces ATP from ADP in the presence of a proton gradient across the membrane. The gamma chain is believed to be important in regulating ATPase activity and the flow of protons through the CF(0) complex. This is ATP synthase gamma chain from Microcystis aeruginosa (strain NIES-843 / IAM M-2473).